A 1132-amino-acid chain; its full sequence is Large proline-rich protein BAG6 (1132 aa).

M1 is modified (N-acetylmethionine). Residues 17–92 enclose the Ubiquitin-like domain; the sequence is LEVLVKTLDS…HLVERAPPQT (76 aa). Disordered stretches follow at residues 87–126 and 189–272; these read RAPP…SVHD and LQCR…NHPS. Residues 95–108 are compositionally biased toward low complexity; sequence PSGASSGTGSASAT. S96 and S113 each carry phosphoserine. T117 is subject to Phosphothreonine. Composition is skewed to pro residues over residues 200–210 and 251–262; these read SQPPPQPPAVT and TPGPAPAGPTPA. Repeat unit 1 spans residues 242-270; that stretch reads RAPAQNPELTPGPAPAGPTPAPETNAPNH. The 4 X 29 AA approximate repeats stretch occupies residues 242-636; that stretch reads RAPAQNPELT…VASPTITVAM (395 aa). Position 350 is a phosphothreonine (T350). Disordered regions lie at residues 385–441, 461–528, and 560–603; these read VTMT…TSHP, IQDS…TLQG, and PGMA…PSMA. Pro residues predominate over residues 393-407; the sequence is RPPPTPNAEAPPPGP. A compositionally biased stretch (low complexity) spans 408–426; that stretch reads GQASSVAPSSTNVESSAEG. Repeat unit 2 spans residues 415-443; the sequence is PSSTNVESSAEGAPPPGPAPPPATSHPRV. 2 stretches are compositionally biased toward pro residues: residues 427–438 and 507–520; these read APPPGPAPPPAT and PTPP…PGGP. Low complexity predominate over residues 569-586; that stretch reads ATASASAGTTNTATTAGP. 2 consecutive repeat copies span residues 574-602 and 608-636. The segment covering 588-599 has biased composition (pro residues); sequence PGGPAQPPPTPQ. Residues 651 to 692 form a disordered region; it reads QATQTAPPPPPPPPPPPPAPEQQTMPPPGSPSGGAGSPGGLG. The span at 656-680 shows a compositional bias: pro residues; it reads APPPPPPPPPPPPAPEQQTMPPPGS. Residues 681–692 show a composition bias toward gly residues; that stretch reads PSGGAGSPGGLG. Phosphoserine is present on residues V832, S964, and S973. The disordered stretch occupies residues 947 to 1132; the sequence is PQPLPEEPME…NAQRAFADDP (186 aa). Residues 1005-1020 are compositionally biased toward low complexity; that stretch reads AETEPWAAAVPPEWVP. Residues 1010–1040 form a required for interaction with GET4 region; it reads WAAAVPPEWVPIIQQDIQSQRKVKPQPPLSD. Residues 1012–1054 carry the Nuclear localization site motif; sequence AAVPPEWVPIIQQDIQSQRKVKPQPPLSDAYLSGMPAKRRKTM. A sufficient for the delivery of client proteins to the endoplasmic reticulum region spans residues 1022–1132; sequence IQQDIQSQRK…NAQRAFADDP (111 aa). The residue at position 1053 (T1053) is a Phosphothreonine. Residues 1058-1115 are BAG-similar domain, required and sufficient for interaction with UBL4A; the sequence is GPQLLLSEAVSRAAKAAGARPLTSPESLSRDLEAPEVQESYRQQLRSDIQKRLQEDPN. The span at 1066-1076 shows a compositional bias: low complexity; it reads AVSRAAKAAGA. Phosphoserine occurs at positions 1081 and 1117.

In terms of assembly, component of the BAG6/BAT3 complex, also named BAT3 complex, at least composed of BAG6, UBL4A and GET4/TRC35. Interacts with GET4; the interaction is direct and localizes BAG6 in the cytosol. Interacts with UBL4A; the interaction is direct and required for UBL4A protein stability. Interacts with AIFM1. Interacts with HSPA2. Interacts with CTCFL. Interacts with p300/EP300. Interacts (via ubiquitin-like domain) with RNF126; required for BAG6-dependent ubiquitination of proteins mislocalized to the cytosol. Interacts (via ubiquitin-like domain) with SGTA; SGTA competes with RNF126 by binding the same region of BAG6, thereby promoting deubiquitination of BAG6-target proteins and rescuing them from degradation. Interacts with ricin A chain. Interacts with VCP and AMFR; both form the VCP/p97-AMFR/gp78 complex. Interacts with SYVN1. Interacts with USP13; the interaction is direct and may mediate UBL4A deubiquitination. Interacts with ZFAND2B. Interacts with KPNA2. Interacts with UBQLN4. (Microbial infection) Interacts with L.pneumophila Lpg2160 and LegU1 proteins. In terms of processing, ricin can induce a cleavage by the caspase CASP3. The released C-terminal peptide induces apoptosis. (Microbial infection) In case of infection by L.pneumophila, ubiquitinated by the SCF(LegU1) complex. In terms of tissue distribution, expressed by immature dendritic cells (at protein level).

The protein resides in the cytoplasm. It is found in the cytosol. The protein localises to the nucleus. It localises to the secreted. Its subcellular location is the extracellular exosome. ATP-independent molecular chaperone preventing the aggregation of misfolded and hydrophobic patches-containing proteins. Functions as part of a cytosolic protein quality control complex, the BAG6/BAT3 complex, which maintains these client proteins in a soluble state and participates in their proper delivery to the endoplasmic reticulum or alternatively can promote their sorting to the proteasome where they undergo degradation. The BAG6/BAT3 complex is involved in the post-translational delivery of tail-anchored/type II transmembrane proteins to the endoplasmic reticulum membrane. Recruited to ribosomes, it interacts with the transmembrane region of newly synthesized tail-anchored proteins and together with SGTA and ASNA1 mediates their delivery to the endoplasmic reticulum. Client proteins that cannot be properly delivered to the endoplasmic reticulum are ubiquitinated by RNF126, an E3 ubiquitin-protein ligase associated with BAG6 and are sorted to the proteasome. SGTA which prevents the recruitment of RNF126 to BAG6 may negatively regulate the ubiquitination and the proteasomal degradation of client proteins. Similarly, the BAG6/BAT3 complex also functions as a sorting platform for proteins of the secretory pathway that are mislocalized to the cytosol either delivering them to the proteasome for degradation or to the endoplasmic reticulum. The BAG6/BAT3 complex also plays a role in the endoplasmic reticulum-associated degradation (ERAD), a quality control mechanism that eliminates unwanted proteins of the endoplasmic reticulum through their retrotranslocation to the cytosol and their targeting to the proteasome. It maintains these retrotranslocated proteins in an unfolded yet soluble state condition in the cytosol to ensure their proper delivery to the proteasome. BAG6 is also required for selective ubiquitin-mediated degradation of defective nascent chain polypeptides by the proteasome. In this context, it may participate in the production of antigenic peptides and play a role in antigen presentation in immune response. BAG6 is also involved in endoplasmic reticulum stress-induced pre-emptive quality control, a mechanism that selectively attenuates the translocation of newly synthesized proteins into the endoplasmic reticulum and reroutes them to the cytosol for proteasomal degradation. BAG6 may ensure the proper degradation of these proteins and thereby protects the endoplasmic reticulum from protein overload upon stress. By inhibiting the polyubiquitination and subsequent proteasomal degradation of HSPA2 it may also play a role in the assembly of the synaptonemal complex during spermatogenesis. Also positively regulates apoptosis by interacting with and stabilizing the proapoptotic factor AIFM1. By controlling the steady-state expression of the IGF1R receptor, indirectly regulates the insulin-like growth factor receptor signaling pathway. Its function is as follows. Involved in DNA damage-induced apoptosis: following DNA damage, accumulates in the nucleus and forms a complex with p300/EP300, enhancing p300/EP300-mediated p53/TP53 acetylation leading to increase p53/TP53 transcriptional activity. When nuclear, may also act as a component of some chromatin regulator complex that regulates histone 3 'Lys-4' dimethylation (H3K4me2). In terms of biological role, released extracellularly via exosomes, it is a ligand of the natural killer/NK cells receptor NCR3 and stimulates NK cells cytotoxicity. It may thereby trigger NK cells cytotoxicity against neighboring tumor cells and immature myeloid dendritic cells (DC). Functionally, mediates ricin-induced apoptosis. The polypeptide is Large proline-rich protein BAG6 (Homo sapiens (Human)).